A 146-amino-acid chain; its full sequence is VHLTGEEKAAVTALWGKVNVDEVGGETLGRLLVVYPWTQRFFDSFGDLSSPDAVMSNPKVKAHGKKVLNSFSEGLKNLDNLKGTFAKLSELHCDKLHVDPENFKLLGNVLVCVLAHHFGKEFTPQVQAAYQKVVAGVANALAHKYH.

N-acetylvaline is present on Val-1. Residues His-2–His-146 form the Globin domain. At Thr-12 the chain carries Phosphothreonine. The residue at position 44 (Ser-44) is a Phosphoserine. An N6-acetyllysine modification is found at Lys-59. His-63 serves as a coordination point for heme b. Lys-82 is modified (N6-acetyllysine). His-92 contributes to the heme b binding site. Cys-93 is subject to S-nitrosocysteine. Residue Lys-144 is modified to N6-acetyllysine.

This sequence belongs to the globin family. In terms of assembly, heterotetramer of two alpha chains and two beta chains. In terms of tissue distribution, red blood cells.

Involved in oxygen transport from the lung to the various peripheral tissues. The sequence is that of Hemoglobin subunit beta (HBB) from Mustela putorius furo (European domestic ferret).